Reading from the N-terminus, the 1382-residue chain is Hepatocyte growth factor receptor (1382 aa).

Residues M1–E24 form the signal peptide. The Extracellular portion of the chain corresponds to E25–T933. Residues R27–L516 form the Sema domain. 3 N-linked (GlcNAc...) asparagine glycosylation sites follow: N38, N49, and N99. 4 cysteine pairs are disulfide-bonded: C94/C100, C97/C160, C133/C141, and C173/C176. Residues N203 and N359 are each glycosylated (N-linked (GlcNAc...) asparagine). 2 disulfides stabilise this stretch: C299-C364 and C386-C398. N400, N406, N450, and N495 each carry an N-linked (GlcNAc...) asparagine glycan. Disulfide bonds link C521–C539, C527–C562, C530–C546, and C542–C552. IPT/TIG domains are found at residues P564 to V656, P658 to K740, and P743 to V837. Residue T583 is glycosylated (O-linked (Man) threonine). 3 N-linked (GlcNAc...) asparagine glycosylation sites follow: N608, N616, and N636. Residues T677 and T762 are each glycosylated (O-linked (Man) threonine). N769, N786, N880, and N931 each carry an N-linked (GlcNAc...) asparagine glycan. A helical membrane pass occupies residues G934–M956. Topologically, residues K957 to T1382 are cytoplasmic. At S967 the chain carries Phosphoserine. Residue T978 is modified to Phosphothreonine. Residues S991, S998, and S1001 each carry the phosphoserine modification. Y1004 is modified (phosphotyrosine). One can recognise a Protein kinase domain in the interval V1079–I1346. Residues I1085 to V1093 and K1111 each bind ATP. D1205 functions as the Proton acceptor in the catalytic mechanism. Residues L1213–T1382 are interaction with RANBP9. Y1231 carries the post-translational modification Phosphotyrosine. A phosphotyrosine; by autocatalysis mark is found at Y1235 and Y1236. At T1290 the chain carries Phosphothreonine. An interaction with MUC20 region spans residues W1321 to V1360. 2 positions are modified to phosphotyrosine; by autocatalysis: Y1350 and Y1357. Phosphotyrosine is present on Y1366.

Belongs to the protein kinase superfamily. Tyr protein kinase family. Heterodimer made of an alpha chain (50 kDa) and a beta chain (145 kDa) which are disulfide linked. Binds PLXNB1. Interacts when phosphorylated with downstream effectors including STAT3, PIK3R1, SRC, PCLG1, GRB2 and GAB1. Interacts with SPSB1, SPSB2 and SPSB4. Interacts with INPP5D/SHIP1. When phosphorylated at Tyr-1357, interacts with INPPL1/SHIP2. Interacts with RANBP9 and RANBP10, as well as SPSB1, SPSB2, SPSB3 and SPSB4. SPSB1 binding occurs in the presence and in the absence of HGF, however HGF treatment has a positive effect on this interaction. Interacts with MUC20; prevents interaction with GRB2 and suppresses hepatocyte growth factor-induced cell proliferation. Interacts with GRB10. Interacts with PTPN1 and PTPN2. Interacts with HSP90AA1 and HSP90AB1; the interaction suppresses MET kinase activity. Interacts with tensin TNS3. Interacts (when phosphorylated) with tensin TNS4 (via SH2 domain); the interaction increases MET protein stability by inhibiting MET endocytosis and subsequent lysosomal degradation. Autophosphorylated in response to ligand binding on Tyr-1235 and Tyr-1236 in the kinase domain leading to further phosphorylation of Tyr-1350 and Tyr-1357 in the C-terminal multifunctional docking site. Dephosphorylated by PTPRJ at Tyr-1350 and Tyr-1366. Dephosphorylated by PTPN1 and PTPN2. Post-translationally, ubiquitinated. Ubiquitination by CBL regulates the receptor stability and activity through proteasomal degradation. In terms of processing, O-mannosylation of IPT/TIG domains by TMEM260 is required for protein maturation. O-mannosylated residues are composed of single mannose glycans that are not elongated or modified.

Its subcellular location is the membrane. The catalysed reaction is L-tyrosyl-[protein] + ATP = O-phospho-L-tyrosyl-[protein] + ADP + H(+). In its inactive state, the C-terminal tail interacts with the catalytic domain and inhibits the kinase activity. Upon ligand binding, the C-terminal tail is displaced and becomes phosphorylated, thus increasing the kinase activity. In terms of biological role, receptor tyrosine kinase that transduces signals from the extracellular matrix into the cytoplasm by binding to hepatocyte growth factor/HGF ligand. Regulates many physiological processes including proliferation, scattering, morphogenesis and survival. Ligand binding at the cell surface induces autophosphorylation of MET on its intracellular domain that provides docking sites for downstream signaling molecules. Following activation by ligand, interacts with the PI3-kinase subunit PIK3R1, PLCG1, SRC, GRB2, STAT3 or the adapter GAB1. Recruitment of these downstream effectors by MET leads to the activation of several signaling cascades including the RAS-ERK, PI3 kinase-AKT, or PLCgamma-PKC. The RAS-ERK activation is associated with the morphogenetic effects while PI3K/AKT coordinates prosurvival effects. During embryonic development, MET signaling plays a role in gastrulation, development and migration of muscles and neuronal precursors, angiogenesis and kidney formation. In adults, participates in wound healing as well as organ regeneration and tissue remodeling. Also promotes differentiation and proliferation of hematopoietic cells. This is Hepatocyte growth factor receptor (MET) from Ornithorhynchus anatinus (Duckbill platypus).